Reading from the N-terminus, the 156-residue chain is ATP synthase subunit b (156 aa).

The helical transmembrane segment at 7 to 27 (IFFQMLVFFVLGWFTMKFVWP) threads the bilayer.

The protein belongs to the ATPase B chain family. As to quaternary structure, F-type ATPases have 2 components, F(1) - the catalytic core - and F(0) - the membrane proton channel. F(1) has five subunits: alpha(3), beta(3), gamma(1), delta(1), epsilon(1). F(0) has three main subunits: a(1), b(2) and c(10-14). The alpha and beta chains form an alternating ring which encloses part of the gamma chain. F(1) is attached to F(0) by a central stalk formed by the gamma and epsilon chains, while a peripheral stalk is formed by the delta and b chains.

The protein resides in the cell inner membrane. F(1)F(0) ATP synthase produces ATP from ADP in the presence of a proton or sodium gradient. F-type ATPases consist of two structural domains, F(1) containing the extramembraneous catalytic core and F(0) containing the membrane proton channel, linked together by a central stalk and a peripheral stalk. During catalysis, ATP synthesis in the catalytic domain of F(1) is coupled via a rotary mechanism of the central stalk subunits to proton translocation. Its function is as follows. Component of the F(0) channel, it forms part of the peripheral stalk, linking F(1) to F(0). This chain is ATP synthase subunit b, found in Bordetella bronchiseptica (strain ATCC BAA-588 / NCTC 13252 / RB50) (Alcaligenes bronchisepticus).